Consider the following 66-residue polypeptide: Early E3 7.7 kDa protein (66 aa).

N-linked (GlcNAc...) asparagine; by host glycosylation is found at N7 and N24. The chain crosses the membrane as a helical span at residues I44 to S64.

Its subcellular location is the host nucleus membrane. The sequence is that of Early E3 7.7 kDa protein from Human adenovirus B serotype 7 (HAdV-7).